Consider the following 311-residue polypeptide: Alpha/beta hydrolase domain-containing protein 17C (311 aa).

Residues 48–67 (EAPASTAQQPPREEGSGEPA) form a disordered region. Active-site charge relay system residues include S193, D258, and H287.

Belongs to the AB hydrolase superfamily. ABHD17 family. Palmitoylated on cysteine residues located in a cysteine cluster at the N-terminus which promotes membrane localization.

The protein resides in the recycling endosome membrane. It localises to the cell projection. The protein localises to the dendritic spine. It is found in the postsynaptic density membrane. It catalyses the reaction S-hexadecanoyl-L-cysteinyl-[protein] + H2O = L-cysteinyl-[protein] + hexadecanoate + H(+). Its function is as follows. Hydrolyzes fatty acids from S-acylated cysteine residues in proteins. Has depalmitoylating activity towards NRAS. This is Alpha/beta hydrolase domain-containing protein 17C from Xenopus laevis (African clawed frog).